A 30-amino-acid polypeptide reads, in one-letter code: Mejucin (30 aa).

It localises to the secreted. Functionally, bacteriocin that inhibits the growth of several Gram-positive bacteria, especially the food-borne pathogens L.monocytogenes, B.cereus strain ATCC 11778, B.cereus strain ATCC 21366, B.cereus strain ATCC 10876 and B.cereus strain ATCC 14579. Likely to act by disrupting the pathogen membrane resulting in leakage of intracellular constituents. Does not inhibit the growth of Gram-negative bacteria. The chain is Mejucin from Bacillus subtilis.